The chain runs to 349 residues: Phenylalanine--tRNA ligase alpha subunit (349 aa).

Position 259 (glutamate 259) interacts with Mg(2+).

The protein belongs to the class-II aminoacyl-tRNA synthetase family. Phe-tRNA synthetase alpha subunit type 1 subfamily. Tetramer of two alpha and two beta subunits. The cofactor is Mg(2+).

Its subcellular location is the cytoplasm. It catalyses the reaction tRNA(Phe) + L-phenylalanine + ATP = L-phenylalanyl-tRNA(Phe) + AMP + diphosphate + H(+). The polypeptide is Phenylalanine--tRNA ligase alpha subunit (Lactobacillus acidophilus (strain ATCC 700396 / NCK56 / N2 / NCFM)).